Here is a 341-residue protein sequence, read N- to C-terminus: UDP-3-O-acylglucosamine N-acyltransferase (341 aa).

The active-site Proton acceptor is the H239.

The protein belongs to the transferase hexapeptide repeat family. LpxD subfamily. As to quaternary structure, homotrimer.

The catalysed reaction is a UDP-3-O-[(3R)-3-hydroxyacyl]-alpha-D-glucosamine + a (3R)-hydroxyacyl-[ACP] = a UDP-2-N,3-O-bis[(3R)-3-hydroxyacyl]-alpha-D-glucosamine + holo-[ACP] + H(+). The protein operates within bacterial outer membrane biogenesis; LPS lipid A biosynthesis. Catalyzes the N-acylation of UDP-3-O-acylglucosamine using 3-hydroxyacyl-ACP as the acyl donor. Is involved in the biosynthesis of lipid A, a phosphorylated glycolipid that anchors the lipopolysaccharide to the outer membrane of the cell. This chain is UDP-3-O-acylglucosamine N-acyltransferase, found in Photobacterium profundum (strain SS9).